A 396-amino-acid polypeptide reads, in one-letter code: Beta-peptidyl aminopeptidase BapA (396 aa).

The N-terminal stretch at Met1–Ala21 is a signal peptide. The active-site Nucleophile is the Ser271. Catalysis depends on proton donor/acceptor residues Ser309 and Asp311.

The protein belongs to the peptidase S58 family. Heterooctamer of 4 heterodimers ((alpha:beta)4); each heterodimer is composed of an alpha subunit and a beta subunit processed from the same precursor. In terms of processing, autoproteolytic processing to generate the alpha and beta subunit is required for self-activation and is proposed to use a similar mechanism as substrate cleavage.

The protein resides in the periplasm. The enzyme catalyses Cleaves N-terminal beta-homoamino acids from peptides composed of 2 to 6 amino acids.. Inhibited by AEBSF (4-(2-aminoethyl)benzenesulfonyl fluoride, Pefabloc SC). Beta-aminopeptidase that can cleave synthetic beta-peptides which consist of backbone-elongated beta-amino acid residues that are not processed by common proteolytic enzymes. Can cleave the beta-peptides beta-homoVal-beta-homoAla-beta-homoLeu and beta-homoAla-beta-homoLeu. Requires a beta-amino acid at the N-terminus of peptide substrates and cleaves the peptide bond between the N-terminal beta-amino acid and the amino acid at the second position of tripeptidic substrates of the general structure H-betahXaa-Ile-betahTyr-OH according to the following preferences with regard to the side chain of the N-terminal beta-amino acid: aliphatic and aromatic &gt; OH-containing &gt; hydrogen, basic and polar. beta-homoVal-beta-homoAla-beta-homoLeu and beta-homoAla-beta-homoLeu. This chain is Beta-peptidyl aminopeptidase BapA, found in Sphingosinicella microcystinivorans.